The primary structure comprises 201 residues: Adenylyl-sulfate kinase (201 aa).

35–42 (GLSGSGKS) contributes to the ATP binding site. Serine 109 functions as the Phosphoserine intermediate in the catalytic mechanism.

Belongs to the APS kinase family.

The catalysed reaction is adenosine 5'-phosphosulfate + ATP = 3'-phosphoadenylyl sulfate + ADP + H(+). It functions in the pathway sulfur metabolism; hydrogen sulfide biosynthesis; sulfite from sulfate: step 2/3. In terms of biological role, catalyzes the synthesis of activated sulfate. The polypeptide is Adenylyl-sulfate kinase (Bacteroides thetaiotaomicron (strain ATCC 29148 / DSM 2079 / JCM 5827 / CCUG 10774 / NCTC 10582 / VPI-5482 / E50)).